The following is a 522-amino-acid chain: Maturase K (522 aa).

It belongs to the intron maturase 2 family. MatK subfamily.

The protein resides in the plastid. Its subcellular location is the chloroplast. In terms of biological role, usually encoded in the trnK tRNA gene intron. Probably assists in splicing its own and other chloroplast group II introns. This Watsonia angusta protein is Maturase K.